The sequence spans 122 residues: Large ribosomal subunit protein uL22c (122 aa).

It belongs to the universal ribosomal protein uL22 family. As to quaternary structure, part of the 50S ribosomal subunit.

It localises to the plastid. The protein resides in the chloroplast. In terms of biological role, this protein binds specifically to 23S rRNA. Functionally, the globular domain of the protein is located near the polypeptide exit tunnel on the outside of the subunit, while an extended beta-hairpin is found that lines the wall of the exit tunnel in the center of the 70S ribosome. The polypeptide is Large ribosomal subunit protein uL22c (rpl22) (Adiantum capillus-veneris (Maidenhair fern)).